Here is a 144-residue protein sequence, read N- to C-terminus: Arsenate reductase ArsI1 (144 aa).

The active-site Nucleophile; cysteine thioarsenate intermediate is Cys-14.

Belongs to the ArsC family.

The catalysed reaction is [glutaredoxin]-dithiol + arsenate + glutathione + H(+) = glutathionyl-S-S-[glutaredoxin] + arsenite + H2O. Functionally, catalyzes the reduction of arsenate [As(V)] to arsenite [As(III)]. Does not constitute the major arsenate reductase in cells: essential only in the absence of ArsC (AC P74313). The chain is Arsenate reductase ArsI1 from Synechocystis sp. (strain ATCC 27184 / PCC 6803 / Kazusa).